Consider the following 395-residue polypeptide: Na(+)/H(+) antiporter NhaA (395 aa).

The next 11 membrane-spanning stretches (helical) occupy residues 11–31 (FQLE…ALII), 61–81 (LLLW…GLEV), 96–116 (IVLP…IYWF), 127–147 (GWAI…ALLG), 156–176 (LFLM…IAIF), 179–199 (GELS…LVAM), 215–237 (LILW…TLAF), 262–282 (VAYG…LSGV), 295–315 (IAVG…WLAV), 334–354 (VAIL…LAFV), and 366–386 (MGIL…TAAA).

The protein belongs to the NhaA Na(+)/H(+) (TC 2.A.33) antiporter family.

It localises to the cell inner membrane. It catalyses the reaction Na(+)(in) + 2 H(+)(out) = Na(+)(out) + 2 H(+)(in). Functionally, na(+)/H(+) antiporter that extrudes sodium in exchange for external protons. This chain is Na(+)/H(+) antiporter NhaA, found in Pseudomonas fluorescens (strain Pf0-1).